A 1057-amino-acid polypeptide reads, in one-letter code: Carbamoyl phosphate synthase large chain (1057 aa).

The interval 1-401 is carboxyphosphate synthetic domain; it reads MPKRNDIKTI…SLLKAIRSLE (401 aa). ATP contacts are provided by R129, R169, G175, G176, K208, I210, E215, G241, I242, H243, Q284, and E298. The region spanning 133–327 is the ATP-grasp 1 domain; sequence RTLMNDLNVP…IAKLAAKIAV (195 aa). Mg(2+) contacts are provided by Q284, E298, and N300. Q284, E298, and N300 together coordinate Mn(2+). The segment at 402 to 546 is oligomerization domain; it reads YGVHHLGLPN…YGTYETENES (145 aa). The tract at residues 547–929 is carbamoyl phosphate synthetic domain; it reads IVTDKEKILV…ALFKGLTGSG (383 aa). Residues 671–861 enclose the ATP-grasp 2 domain; the sequence is EALLRKINVP…MAQLAMRAII (191 aa). ATP-binding residues include R707, R746, L748, E752, G777, V778, H779, S780, Q820, and E832. Positions 820, 832, and 834 each coordinate Mg(2+). Mn(2+) contacts are provided by Q820, E832, and N834. Residues 930–1057 form the MGS-like domain; sequence VEVKDHGTVL…ESMTFTMRQM (128 aa). The interval 930–1057 is allosteric domain; the sequence is VEVKDHGTVL…ESMTFTMRQM (128 aa).

The protein belongs to the CarB family. In terms of assembly, composed of two chains; the small (or glutamine) chain promotes the hydrolysis of glutamine to ammonia, which is used by the large (or ammonia) chain to synthesize carbamoyl phosphate. Tetramer of heterodimers (alpha,beta)4. It depends on Mg(2+) as a cofactor. Mn(2+) is required as a cofactor.

The enzyme catalyses hydrogencarbonate + L-glutamine + 2 ATP + H2O = carbamoyl phosphate + L-glutamate + 2 ADP + phosphate + 2 H(+). The catalysed reaction is hydrogencarbonate + NH4(+) + 2 ATP = carbamoyl phosphate + 2 ADP + phosphate + 2 H(+). It participates in amino-acid biosynthesis; L-arginine biosynthesis; carbamoyl phosphate from bicarbonate: step 1/1. The protein operates within pyrimidine metabolism; UMP biosynthesis via de novo pathway; (S)-dihydroorotate from bicarbonate: step 1/3. Its function is as follows. Large subunit of the glutamine-dependent carbamoyl phosphate synthetase (CPSase). CPSase catalyzes the formation of carbamoyl phosphate from the ammonia moiety of glutamine, carbonate, and phosphate donated by ATP, constituting the first step of 2 biosynthetic pathways, one leading to arginine and/or urea and the other to pyrimidine nucleotides. The large subunit (synthetase) binds the substrates ammonia (free or transferred from glutamine from the small subunit), hydrogencarbonate and ATP and carries out an ATP-coupled ligase reaction, activating hydrogencarbonate by forming carboxy phosphate which reacts with ammonia to form carbamoyl phosphate. The sequence is that of Carbamoyl phosphate synthase large chain from Staphylococcus aureus (strain Mu3 / ATCC 700698).